Reading from the N-terminus, the 2193-residue chain is Genome polyprotein (2193 aa).

A disordered region spans residues Met1 to Gly22. Residue Gly2 is the site of N-myristoyl glycine; by host attachment. Residues Gly2 to Gln1503 are Cytoplasmic-facing. Amphipathic alpha-helix stretches follow at residues Gly566–Leu588 and Gly568–Leu588. Residues His883 and Asp901 each act as for protease 2A activity in the active site. Cys918 and Cys920 together coordinate Zn(2+). Cys972 acts as the For protease 2A activity in catalysis. Zn(2+) is bound by residues Cys978 and His980. Positions Ser1112–Leu1184 are membrane-binding. The tract at residues Ser1112–Thr1250 is oligomerization. Positions Ser1133–Ser1137 are RNA-binding. The 159-residue stretch at Glu1216–Ala1374 folds into the SF3 helicase domain. Gly1240–Ser1247 provides a ligand contact to ATP. Residues Cys1381, Cys1392, and Cys1397 each coordinate Zn(2+). The C4-type; degenerate zinc finger occupies Cys1381–Cys1397. The interval Glu1424 to Ile1431 is RNA-binding. Positions Ile1435–Gln1440 are oligomerization. An intramembrane segment occupies Ser1504–Tyr1519. Residues Lys1520–Phe2193 lie on the Cytoplasmic side of the membrane. The residue at position 1529 (Tyr1529) is an O-(5'-phospho-RNA)-tyrosine. Residues Gly1549–Phe1727 form the Peptidase C3 domain. Active-site for protease 3C activity residues include His1588, Glu1619, and Cys1695. The RdRp catalytic domain occupies Gly1958–Leu2073. 2 residues coordinate Mg(2+): Asp1964 and Asp2060.

It belongs to the picornaviruses polyprotein family. Interacts with capsid protein VP1 and capsid protein VP3 to form heterotrimeric protomers. In terms of assembly, interacts with capsid protein VP0, and capsid protein VP3 to form heterotrimeric protomers. Five protomers subsequently associate to form pentamers which serve as building blocks for the capsid. Interacts with capsid protein VP2, capsid protein VP3 and capsid protein VP4 following cleavage of capsid protein VP0. As to quaternary structure, interacts with capsid protein VP1 and capsid protein VP3 in the mature capsid. Interacts with capsid protein VP0 and capsid protein VP1 to form heterotrimeric protomers. Five protomers subsequently associate to form pentamers which serve as building blocks for the capsid. Interacts with capsid protein VP4 in the mature capsid. Interacts with protein 2C; this interaction may be important for virion morphogenesis. In terms of assembly, interacts with capsid protein VP1 and capsid protein VP3. As to quaternary structure, homodimer. Homohexamer; forms a hexameric ring structure with 6-fold symmetry characteristic of AAA+ ATPases. Interacts (via N-terminus) with host RTN3 (via reticulon domain); this interaction is important for viral replication. Interacts with capsid protein VP3; this interaction may be important for virion morphogenesis. In terms of assembly, interacts with protein 3CD. As to quaternary structure, homodimer. Interacts with host GBF1. Interacts (via GOLD domain) with host ACBD3 (via GOLD domain); this interaction allows the formation of a viral protein 3A/ACBD3 heterotetramer with a 2:2 stoichiometry, which will stimulate the recruitment of host PI4KB in order to synthesize PI4P at the viral RNA replication sites. Interacts with RNA-directed RNA polymerase. In terms of assembly, interacts with host IFIH1/MDA5; this interaction inhibits host IFIH1. As to quaternary structure, interacts with protein 3AB and with RNA-directed RNA polymerase. Interacts with Viral protein genome-linked and with protein 3CD. It depends on Mg(2+) as a cofactor. Post-translationally, specific enzymatic cleavages in vivo by the viral proteases yield processing intermediates and the mature proteins. In terms of processing, myristoylation is required for the formation of pentamers during virus assembly. Further assembly of 12 pentamers and a molecule of genomic RNA generates the provirion. During virion maturation, immature virions are rendered infectious following cleavage of VP0 into VP4 and VP2. This maturation seems to be an autocatalytic event triggered by the presence of RNA in the capsid and it is followed by a conformational change infectious virion. Post-translationally, myristoylation is required during RNA encapsidation and formation of the mature virus particle. In terms of processing, VPg is uridylylated by the polymerase into VPg-pUpU. This acts as a nucleotide-peptide primer for the genomic RNA replication.

It localises to the virion. It is found in the host cytoplasm. The protein resides in the host cytoplasmic vesicle membrane. The protein localises to the host nucleus. It carries out the reaction a ribonucleoside 5'-triphosphate + H2O = a ribonucleoside 5'-diphosphate + phosphate + H(+). The enzyme catalyses Selective cleavage of Tyr-|-Gly bond in the picornavirus polyprotein.. It catalyses the reaction RNA(n) + a ribonucleoside 5'-triphosphate = RNA(n+1) + diphosphate. The catalysed reaction is Selective cleavage of Gln-|-Gly bond in the poliovirus polyprotein. In other picornavirus reactions Glu may be substituted for Gln, and Ser or Thr for Gly.. Replication or transcription is subject to high level of random mutations by the nucleotide analog ribavirin. Its function is as follows. Forms an icosahedral capsid of pseudo T=3 symmetry with capsid proteins VP2 and VP3. The capsid is 300 Angstroms in diameter, composed of 60 copies of each capsid protein and enclosing the viral positive strand RNA genome. Capsid protein VP1 mainly forms the vertices of the capsid. Capsid protein VP1 interacts with host cell receptor to provide virion attachment to target host cells. This attachment induces virion internalization. After binding to its receptor, the capsid undergoes conformational changes. Capsid protein VP1 N-terminus (that contains an amphipathic alpha-helix) and capsid protein VP4 are externalized. Together, they shape a pore in the host membrane through which viral genome is translocated to host cell cytoplasm. In terms of biological role, forms an icosahedral capsid of pseudo T=3 symmetry with capsid proteins VP2 and VP3. The capsid is 300 Angstroms in diameter, composed of 60 copies of each capsid protein and enclosing the viral positive strand RNA genome. Lies on the inner surface of the capsid shell. After binding to the host receptor, the capsid undergoes conformational changes. Capsid protein VP4 is released, Capsid protein VP1 N-terminus is externalized, and together, they shape a pore in the host membrane through which the viral genome is translocated into the host cell cytoplasm. Functionally, component of immature procapsids, which is cleaved into capsid proteins VP4 and VP2 after maturation. Allows the capsid to remain inactive before the maturation step. Its function is as follows. Cysteine protease that cleaves viral polyprotein and specific host proteins. It is responsible for the autocatalytic cleavage between the P1 and P2 regions, which is the first cleavage occurring in the polyprotein. Also cleaves the host translation initiation factor EIF4G1, in order to shut down the capped cellular mRNA translation. Inhibits the host nucleus-cytoplasm protein and RNA trafficking by cleaving host members of the nuclear pores. Counteracts stress granule formation probably by antagonizing its assembly or promoting its dissassembly. Cleaves and inhibits host IFIH1/MDA5, thereby inhibiting the type-I IFN production and the establishment of the antiviral state. Cleaves and inhibits host MAVS, thereby inhibiting the type-I IFN production and the establishment of the antiviral state. In terms of biological role, plays an essential role in the virus replication cycle by acting as a viroporin. Creates a pore in the host endoplasmic reticulum and as a consequence releases Ca2+ in the cytoplasm of infected cell. In turn, high levels of cytoplasmic calcium may trigger membrane trafficking and transport of viral ER-associated proteins to viroplasms, sites of viral genome replication. Induces and associates with structural rearrangements of intracellular membranes. Displays RNA-binding, nucleotide binding and NTPase activities. May play a role in virion morphogenesis and viral RNA encapsidation by interacting with the capsid protein VP3. Functionally, localizes the viral replication complex to the surface of membranous vesicles. Together with protein 3CD binds the Cis-Active RNA Element (CRE) which is involved in RNA synthesis initiation. Acts as a cofactor to stimulate the activity of 3D polymerase, maybe through a nucleid acid chaperone activity. Its function is as follows. Localizes the viral replication complex to the surface of membranous vesicles. It inhibits host cell endoplasmic reticulum-to-Golgi apparatus transport and causes the disassembly of the Golgi complex, possibly through GBF1 interaction. This would result in depletion of MHC, trail receptors and IFN receptors at the host cell surface. Plays an essential role in viral RNA replication by recruiting ACBD3 and PI4KB at the viral replication sites, thereby allowing the formation of the rearranged membranous structures where viral replication takes place. In terms of biological role, acts as a primer for viral RNA replication and remains covalently bound to viral genomic RNA. VPg is uridylylated prior to priming replication into VPg-pUpU. The oriI viral genomic sequence may act as a template for this. The VPg-pUpU is then used as primer on the genomic RNA poly(A) by the RNA-dependent RNA polymerase to replicate the viral genome. During genome replication, the VPg-RNA linkage is removed by the host TDP2, thereby accelerating replication. During the late stage of the replication cycle, host TDP2 is excluded from sites of viral RNA synthesis and encapsidation, allowing for the generation of progeny virions. Involved in the viral replication complex and viral polypeptide maturation. It exhibits protease activity with a specificity and catalytic efficiency that is different from protease 3C. Protein 3CD lacks polymerase activity. Protein 3CD binds to the 5'UTR of the viral genome. Functionally, major viral protease that mediates proteolytic processing of the polyprotein. Cleaves host EIF5B, contributing to host translation shutoff. Also cleaves host PABPC1, contributing to host translation shutoff. Binds and inhibits host IFIH1/MDA5, thereby inhibiting the type-I IFN production and the establishment of the antiviral state. Cleaves host MAP3K7/TAK1, resulting in inhibition of TRAF6-triggered NF-kappa-B induction. Cleaves host NLRP1, triggers host N-glycine-mediated degradation of the autoinhibitory NLRP1 N-terminal fragment. Its function is as follows. Replicates the viral genomic RNA on the surface of intracellular membranes. May form linear arrays of subunits that propagate along a strong head-to-tail interaction called interface-I. Covalently attaches UMP to a tyrosine of VPg, which is used to prime RNA synthesis. The positive stranded RNA genome is first replicated at virus induced membranous vesicles, creating a dsRNA genomic replication form. This dsRNA is then used as template to synthesize positive stranded RNA genomes. ss(+)RNA genomes are either translated, replicated or encapsidated. The chain is Genome polyprotein from Homo sapiens (Human).